Reading from the N-terminus, the 88-residue chain is C-C motif chemokine 18 (88 aa).

A signal peptide spans 1–19 (MKGLAAALLVLCTVALCSC). Cystine bridges form between Cys29–Cys53 and Cys30–Cys69.

This sequence belongs to the intercrine beta (chemokine CC) family. In terms of processing, the Cys-29/Cys-53 disulfide bond is required for activity.

The protein localises to the secreted. Its function is as follows. Chemotactic factor that attracts lymphocytes but not monocytes or granulocytes. May be involved in B-cell migration into B-cell follicles in lymph nodes. Attracts naive T-lymphocytes toward dendritic cells and activated macrophages in lymph nodes, has chemotactic activity for naive T-cells, CD4+ and CD8+ T-cells and thus may play a role in both humoral and cell-mediated immunity responses. In Macaca mulatta (Rhesus macaque), this protein is C-C motif chemokine 18 (CCL18).